Consider the following 151-residue polypeptide: Large ribosomal subunit protein bL9 (151 aa).

The protein belongs to the bacterial ribosomal protein bL9 family.

Binds to the 23S rRNA. This chain is Large ribosomal subunit protein bL9, found in Rhodococcus opacus (strain B4).